We begin with the raw amino-acid sequence, 90 residues long: MHLSLARSAGLMWLLLFAVGNFVGVQPGQITRDVDNGQLADNRRNLQSLRKPMTLFKSLNKRVSCGEYCGDYGDCPSSCPTCTSNLLKCM.

A signal peptide spans Met1–Pro27. Positions Gly28–Arg62 are excised as a propeptide. Glu67 carries the post-translational modification 4-carboxyglutamate. A 4-hydroxyproline mark is found at Pro76 and Pro80.

In terms of tissue distribution, expressed by the venom duct.

It is found in the secreted. In Conus bayani (Bayan's cone), this protein is Conotoxin ba9a.